The following is a 317-amino-acid chain: Ret finger protein-like 1 (317 aa).

The RING-type zinc-finger motif lies at 40-82 (CPVCSDYLEKPMSLECGCAVCFKCINSLQKEPHGEDLLCCCCS). In terms of domain architecture, B30.2/SPRY spans 107–301 (EPKLKKILQM…DKSVLSICPV (195 aa)).

In terms of processing, phosphorylated by PKC and CDK1. The antiproliferative effect seems to be positively regulated by PKC phosphorylation and negatively by CDK1 phosphorylation. In terms of tissue distribution, seems to be expressed in prostate and less abundantly in adult brain, fetal liver, and fetal kidney.

Its subcellular location is the cytoplasm. It is found in the nucleus. Negatively regulates the G2-M phase transition, possibly by promoting cyclin B1/CCNB1 and CDK1 proteasomal degradation and thereby preventing their accumulation during interphase. This chain is Ret finger protein-like 1 (RFPL1), found in Homo sapiens (Human).